A 332-amino-acid chain; its full sequence is Methionyl-tRNA formyltransferase (332 aa).

114–117 (SLLP) contacts (6S)-5,6,7,8-tetrahydrofolate.

The protein belongs to the Fmt family.

It catalyses the reaction L-methionyl-tRNA(fMet) + (6R)-10-formyltetrahydrofolate = N-formyl-L-methionyl-tRNA(fMet) + (6S)-5,6,7,8-tetrahydrofolate + H(+). In terms of biological role, attaches a formyl group to the free amino group of methionyl-tRNA(fMet). The formyl group appears to play a dual role in the initiator identity of N-formylmethionyl-tRNA by promoting its recognition by IF2 and preventing the misappropriation of this tRNA by the elongation apparatus. The chain is Methionyl-tRNA formyltransferase from Corynebacterium aurimucosum (strain ATCC 700975 / DSM 44827 / CIP 107346 / CN-1) (Corynebacterium nigricans).